We begin with the raw amino-acid sequence, 879 residues long: Alanine--tRNA ligase (879 aa).

Zn(2+) is bound by residues histidine 566, histidine 570, cysteine 668, and histidine 672.

This sequence belongs to the class-II aminoacyl-tRNA synthetase family. It depends on Zn(2+) as a cofactor.

It localises to the cytoplasm. The enzyme catalyses tRNA(Ala) + L-alanine + ATP = L-alanyl-tRNA(Ala) + AMP + diphosphate. In terms of biological role, catalyzes the attachment of alanine to tRNA(Ala) in a two-step reaction: alanine is first activated by ATP to form Ala-AMP and then transferred to the acceptor end of tRNA(Ala). Also edits incorrectly charged Ser-tRNA(Ala) and Gly-tRNA(Ala) via its editing domain. This chain is Alanine--tRNA ligase, found in Clostridium beijerinckii (strain ATCC 51743 / NCIMB 8052) (Clostridium acetobutylicum).